The primary structure comprises 259 residues: Protein-tyrosine phosphatase RolB (259 aa).

A disordered region spans residues 219 to 259 (GISRPAASSPEPDLTLRLSGPDQEGEEGVMKPAAVNLKKEA).

The catalysed reaction is O-phospho-L-tyrosyl-[protein] + H2O = L-tyrosyl-[protein] + phosphate. In terms of biological role, induces differentiation and growth of neoplastic roots (hairy roots). Seems to function as a tyrosine phosphatase. The sequence is that of Protein-tyrosine phosphatase RolB (rolB) from Rhizobium rhizogenes (Agrobacterium rhizogenes).